The chain runs to 1124 residues: Zinc finger E-box-binding homeobox 1 (1124 aa).

Disordered regions lie at residues methionine 1 to proline 124 and alanine 142 to proline 163. The span at asparagine 18–asparagine 30 shows a compositional bias: low complexity. Serine 31 and serine 33 each carry phosphoserine. The segment covering glutamate 44–proline 62 has biased composition (acidic residues). Residues serine 72 to glutamine 91 are compositionally biased toward basic and acidic residues. The C2H2-type 1 zinc finger occupies leucine 170–histidine 193. Glycyl lysine isopeptide (Lys-Gly) (interchain with G-Cter in SUMO2) cross-links involve residues lysine 186 and lysine 195. 2 C2H2-type zinc fingers span residues phenylalanine 200–histidine 222 and phenylalanine 240–histidine 262. A C2H2-type 4; atypical zinc finger spans residues tyrosine 268–cysteine 292. Residues threonine 304 to glutamine 327 form a disordered region. Lysine 307 is covalently cross-linked (Glycyl lysine isopeptide (Lys-Gly) (interchain with G-Cter in SUMO2)). Low complexity predominate over residues serine 309–serine 322. 2 positions are modified to phosphoserine: serine 313 and serine 322. Residues lysine 331 and lysine 335 each participate in a glycyl lysine isopeptide (Lys-Gly) (interchain with G-Cter in SUMO2) cross-link. Lysine 347 is covalently cross-linked (Glycyl lysine isopeptide (Lys-Gly) (interchain with G-Cter in SUMO); alternate). Residue lysine 347 forms a Glycyl lysine isopeptide (Lys-Gly) (interchain with G-Cter in SUMO2); alternate linkage. Residues lysine 439, lysine 493, lysine 504, lysine 515, lysine 548, and lysine 553 each participate in a glycyl lysine isopeptide (Lys-Gly) (interchain with G-Cter in SUMO2) cross-link. Disordered regions lie at residues aspartate 551–glutamine 586 and glutamine 636–arginine 714. Positions asparagine 581–glutamine 640 form a DNA-binding region, homeobox; atypical. 5 positions are modified to phosphoserine: serine 642, serine 679, serine 686, serine 693, and serine 700. Over residues alanine 656–proline 687 the composition is skewed to polar residues. The span at glycine 692–arginine 714 shows a compositional bias: low complexity. Position 702 is a phosphothreonine (threonine 702). At serine 704 the chain carries Phosphoserine. Lysine 774 participates in a covalent cross-link: Glycyl lysine isopeptide (Lys-Gly) (interchain with G-Cter in SUMO); alternate. Residue lysine 774 forms a Glycyl lysine isopeptide (Lys-Gly) (interchain with G-Cter in SUMO2); alternate linkage. The segment at proline 856 to lysine 898 is disordered. The span at serine 874–threonine 890 shows a compositional bias: polar residues. C2H2-type zinc fingers lie at residues tyrosine 904–histidine 926 and histidine 932–histidine 954. A C2H2-type 7; atypical zinc finger spans residues tyrosine 960 to histidine 981. Residues glutamate 989 to alanine 1124 form a disordered region. Acidic residues-rich tracts occupy residues glutamate 1031 to glutamate 1052 and aspartate 1062 to glycine 1084. Residues glutamate 1085–glutamate 1099 show a composition bias toward basic and acidic residues. Polar residues predominate over residues serine 1100–glutamine 1115.

The protein belongs to the delta-EF1/ZFH-1 C2H2-type zinc-finger family. Interacts (via N-terminus) with SMARCA4/BRG1. In terms of processing, ubiquitinated, leading to degradation in a proteasome-dependent manner. Deubiquitinated by USP51, leading to stabilization. As to expression, colocalizes with SMARCA4/BRG1 in E-cadherin-negative cells from established lines, and stroma of normal colon as well as in de-differentiated epithelial cells at the invasion front of colorectal carcinomas (at protein level). Expressed in heart and skeletal muscle, but not in liver, spleen, or pancreas.

It is found in the nucleus. Acts as a transcriptional repressor. Inhibits interleukin-2 (IL-2) gene expression. Enhances or represses the promoter activity of the ATP1A1 gene depending on the quantity of cDNA and on the cell type. Represses E-cadherin promoter and induces an epithelial-mesenchymal transition (EMT) by recruiting SMARCA4/BRG1. Represses BCL6 transcription in the presence of the corepressor CTBP1. Positively regulates neuronal differentiation. Represses RCOR1 transcription activation during neurogenesis. Represses transcription by binding to the E box (5'-CANNTG-3'). In the absence of TGFB1, acts as a repressor of COL1A2 transcription via binding to the E-box in the upstream enhancer region. The protein is Zinc finger E-box-binding homeobox 1 of Homo sapiens (Human).